A 136-amino-acid chain; its full sequence is ATP synthase F(0) complex subunit C1, mitochondrial (136 aa).

The transit peptide at 1 to 61 directs the protein to the mitochondrion; the sequence is MQTTKALLIS…REFQTSVISR (61 aa). Residues 77–97 form a helical membrane-spanning segment; the sequence is VGVAGSGAGIGTVFGSLIIGY. N6,N6,N6-trimethyllysine is present on Lys-104. A helical transmembrane segment spans residues 112 to 132; it reads ILGFALSEAMGLFCLMVAFLI.

The protein belongs to the ATPase C chain family. Homooctamer; the c-ring consists of eight c subunits forming a circle, and each subunit adopts a hairpin shape. Component of the ATP synthase complex composed at least of ATP5F1A/subunit alpha, ATP5F1B/subunit beta, ATP5MC1/subunit c (homooctomer), MT-ATP6/subunit a, MT-ATP8/subunit 8, ATP5ME/subunit e, ATP5MF/subunit f, ATP5MG/subunit g, ATP5MK/subunit k, ATP5MJ/subunit j, ATP5F1C/subunit gamma, ATP5F1D/subunit delta, ATP5F1E/subunit epsilon, ATP5PF/subunit F6, ATP5PB/subunit b, ATP5PD/subunit d, ATP5PO/subunit OSCP. ATP synthase complex consists of a soluble F(1) head domain (subunits alpha(3) and beta(3)) - the catalytic core - and a membrane F(0) domain - the membrane proton channel (subunits c, a, 8, e, f, g, k and j). These two domains are linked by a central stalk (subunits gamma, delta, and epsilon) rotating inside the F1 region and a stationary peripheral stalk (subunits F6, b, d, and OSCP). Interacts with TMEM70 (homooligomer form); this interaction facilitates the oligomer formation of subunit c/ATP5MC1 (c-ring) and the c-ring membrane insertion and also protects ATP5MC1 against intramitochondrial proteolysis. In terms of processing, trimethylated by ATPSCKMT at Lys-104. Methylation is required for proper incorporation of the C subunit into the ATP synthase complex and mitochondrial respiration.

The protein resides in the mitochondrion membrane. It carries out the reaction H(+)(in) = H(+)(out). Subunit c, of the mitochondrial membrane ATP synthase complex (F(1)F(0) ATP synthase or Complex V) that produces ATP from ADP in the presence of a proton gradient across the membrane which is generated by electron transport complexes of the respiratory chain. ATP synthase complex consist of a soluble F(1) head domain - the catalytic core - and a membrane F(1) domain - the membrane proton channel. These two domains are linked by a central stalk rotating inside the F(1) region and a stationary peripheral stalk. During catalysis, ATP synthesis in the catalytic domain of F(1) is coupled via a rotary mechanism of the central stalk subunits to proton translocation. With the subunit a (MT-ATP6), forms the proton-conducting channel in the F(0) domain, that contains two crucial half-channels (inlet and outlet) that facilitate proton movement from the mitochondrial intermembrane space (IMS) into the matrix. Protons are taken up via the inlet half-channel and released through the outlet half-channel, following a Grotthuss mechanism. This Rattus norvegicus (Rat) protein is ATP synthase F(0) complex subunit C1, mitochondrial.